Consider the following 271-residue polypeptide: Phosphatidylinositol transfer protein beta isoform (271 aa).

K215 carries the N6-acetyllysine modification. Residue S262 is modified to Phosphoserine.

Belongs to the PtdIns transfer protein family. PI transfer class I subfamily. Post-translationally, constitutive phosphorylation of Ser-262 has no effect on phospholipid transfer activity but is required for Golgi targeting. Widely expressed in various tissues including brain.

Its subcellular location is the golgi apparatus. It localises to the golgi apparatus membrane. The protein localises to the endoplasmic reticulum membrane. It catalyses the reaction a 1,2-diacyl-sn-glycero-3-phosphocholine(in) = a 1,2-diacyl-sn-glycero-3-phosphocholine(out). It carries out the reaction a 1,2-diacyl-sn-glycero-3-phospho-(1D-myo-inositol)(in) = a 1,2-diacyl-sn-glycero-3-phospho-(1D-myo-inositol)(out). The enzyme catalyses an N-(acyl)-sphingosylphosphocholine(in) = an N-(acyl)-sphingosylphosphocholine(out). With respect to regulation, phosphatidylinositol transfer activity is inhibited by N-ethylmaleimide. Functionally, catalyzes the transfer of phosphatidylinositol and phosphatidylcholine between membranes. Also catalyzes the transfer of sphingomyelin. Required for COPI-mediated retrograde transport from the Golgi to the endoplasmic reticulum; phosphatidylinositol and phosphatidylcholine transfer activity is essential for this function. The chain is Phosphatidylinositol transfer protein beta isoform (PITPNB) from Homo sapiens (Human).